Consider the following 64-residue polypeptide: Large ribosomal subunit protein uL30 (64 aa).

It belongs to the universal ribosomal protein uL30 family. In terms of assembly, part of the 50S ribosomal subunit.

This is Large ribosomal subunit protein uL30 from Rhodopseudomonas palustris (strain BisA53).